The chain runs to 511 residues: Potassium voltage-gated channel subfamily A member 10 (511 aa).

Residues 22 to 50 form a disordered region; it reads IQEEPGYATDFDSTSPKGRPGGSSFSNGK. A helical membrane pass occupies residues 218 to 238; the sequence is VAVVSVLVVVISITIFCLETL. N-linked (GlcNAc...) asparagine glycosylation occurs at asparagine 256. A helical membrane pass occupies residues 271 to 292; sequence FFMVESTCIVWFTFELVLRFVV. Cysteine 293 is lipidated: S-palmitoyl cysteine. The helical transmembrane segment at 303-323 threads the bilayer; the sequence is IMNIIDIISIIPYFATLITEL. Asparagine 334 carries an N-linked (GlcNAc...) asparagine glycan. A helical; Voltage-sensor membrane pass occupies residues 339-358; it reads ILRIIRLVRVFRIFKLSRHS. The chain crosses the membrane as a helical span at residues 375 to 395; that stretch reads LGLLIFFLFIGVILFSSAVYF. A Selectivity filter motif is present at residues 421 to 426; the sequence is TVGYGD. A helical membrane pass occupies residues 436–456; that stretch reads IVGTLCAIAGVLTIALPVPVI. The disordered stretch occupies residues 489–511; it reads SRMGSTDSLNKTNGGCSTEKSRK. Residue asparagine 498 is glycosylated (N-linked (GlcNAc...) asparagine).

The protein belongs to the potassium channel family. A (Shaker) (TC 1.A.1.2) subfamily. Kv1.8/KCNA10 sub-subfamily. Homotetramer. Interacts with KCN4B/POMP. Interaction with KCN4B/POMP is necessary for the modulation of channel activity by cAMP. In terms of tissue distribution, detected in kidney, in proximal tubules, glomerular endothelium, in vascular endothelium and in smooth muscle cells.

The protein localises to the membrane. The catalysed reaction is K(+)(in) = K(+)(out). The channel activity is up-regulated by cAMP. In terms of biological role, voltage-gated potassium ion channel that mediates K(+) permeability of excitable membranes. When opened in response to the voltage difference across the membrane, KCNA10 channel selectively allows the flow of potassium ions across the membrane down their electrochemical gradient. The sequence is that of Potassium voltage-gated channel subfamily A member 10 from Homo sapiens (Human).